A 169-amino-acid chain; its full sequence is Ribosome maturation factor RimM (169 aa).

The 73-residue stretch at 97–169 folds into the PRC barrel domain; that stretch reads EDEVYFKDLI…KIVVDWEYDY (73 aa).

Belongs to the RimM family. In terms of assembly, binds ribosomal protein uS19.

It localises to the cytoplasm. Its function is as follows. An accessory protein needed during the final step in the assembly of 30S ribosomal subunit, possibly for assembly of the head region. Essential for efficient processing of 16S rRNA. May be needed both before and after RbfA during the maturation of 16S rRNA. It has affinity for free ribosomal 30S subunits but not for 70S ribosomes. The protein is Ribosome maturation factor RimM of Francisella tularensis subsp. holarctica (strain FTNF002-00 / FTA).